Reading from the N-terminus, the 177-residue chain is Early nodulin-like protein 6 (177 aa).

Residues 1–23 form the signal peptide; it reads MGGQKIVLLSIFVCFYVFSLVSC. Residues 24–127 form the Phytocyanin domain; that stretch reads TEFEAGGENG…GQKMIIKVME (104 aa). Residue N41 is glycosylated (N-linked (GlcNAc...) asparagine). C81 and C115 are joined by a disulfide. N149 is lipidated: GPI-anchor amidated asparagine. A propeptide spans 150–177 (removed in mature form); it reads HAVRKTSRFLGAGLVTISILVITVFSLV.

It belongs to the early nodulin-like (ENODL) family. Confined to flowers.

Its subcellular location is the cell membrane. Functionally, may act as a carbohydrate transporter. This Arabidopsis thaliana (Mouse-ear cress) protein is Early nodulin-like protein 6.